Here is a 174-residue protein sequence, read N- to C-terminus: Austinoid biosynthesis clusters protein H (174 aa).

This sequence belongs to the trt14 isomerase family. Homodimer.

Its pathway is secondary metabolite biosynthesis; terpenoid biosynthesis. Functionally, part of the gene cluster B that mediates the biosynthesis of austinol and dehydroaustinol, two fungal meroterpenoids. The first step of the pathway is the synthesis of 3,5-dimethylorsellinic acid by the polyketide synthase ausA. 3,5-dimethylorsellinic acid is then prenylated by the polyprenyl transferase ausN. Further epoxidation by the FAD-dependent monooxygenase ausM and cyclization by the probable terpene cyclase ausL lead to the formation of protoaustinoid A. Protoaustinoid A is then oxidized to spiro-lactone preaustinoid A3 by the combined action of the FAD-binding monooxygenases ausB and ausC, and the dioxygenase ausE. Acid-catalyzed keto-rearrangement and ring contraction of the tetraketide portion of preaustinoid A3 by ausJ lead to the formation of preaustinoid A4. The aldo-keto reductase ausK, with the help of ausH, is involved in the next step by transforming preaustinoid A4 into isoaustinone which is in turn hydroxylated by the P450 monooxygenase ausI to form austinolide. Finally, the cytochrome P450 monooxygenase ausG modifies austinolide to austinol. Austinol can be further modified to dehydroaustinol which forms a diffusible complex with diorcinol that initiates conidiation. Due to genetic rearrangements of the clusters and the subsequent loss of some enzymes, the end products of the Emericella nidulans austinoid biosynthesis clusters are austinol and dehydroaustinol, even if additional enzymes, such as the O-acetyltransferase ausQ and the cytochrome P450 monooxygenase ausR are still functional. The protein is Austinoid biosynthesis clusters protein H of Emericella nidulans (strain FGSC A4 / ATCC 38163 / CBS 112.46 / NRRL 194 / M139) (Aspergillus nidulans).